The primary structure comprises 69 residues: Small ribosomal subunit protein bS21 (69 aa).

A disordered region spans residues 50–69; it reads KAFKRKQAKKVRKLKQKTNR.

Belongs to the bacterial ribosomal protein bS21 family.

This is Small ribosomal subunit protein bS21 from Borrelia garinii subsp. bavariensis (strain ATCC BAA-2496 / DSM 23469 / PBi) (Borreliella bavariensis).